The primary structure comprises 591 residues: ATPase family AAA domain-containing protein 3A (591 aa).

The tract at residues 1–52 is disordered; it reads MSWLFGIKGPKGEGTGPPLPLPPAQPGAESGGDRGAGDRPSPKDKWSNFDPT. Ser-2 is modified (N-acetylserine). The required for interaction with the inner surface of the mitochondrial outer membrane stretch occupies residues 2–49; it reads SWLFGIKGPKGEGTGPPLPLPPAQPGAESGGDRGAGDRPSPKDKWSNF. Residues 2-245 lie on the Mitochondrial intermembrane side of the membrane; that stretch reads SWLFGIKGPK…FRAFVTDWDK (244 aa). Positions 31 to 47 are enriched in basic and acidic residues; the sequence is GGDRGAGDRPSPKDKWS. A coiled-coil region spans residues 55–216; sequence ERAAKAAREL…REQIRLKAAE (162 aa). A helical membrane pass occupies residues 246–263; the sequence is VTATVAGLTLLAVGVYSA. Over 264 to 591 the chain is Mitochondrial matrix; the sequence is KNATSVAGRY…KPPHPSLLSC (328 aa). Residues 289–304 are S100B-binding; that stretch reads RISVLEALRHPIQVSR. ATP is bound at residue 351–358; it reads GPPGTGKT. Lys-490 carries the post-translational modification N6-acetyllysine; alternate. Lys-490 is modified (N6-succinyllysine; alternate). An N6-acetyllysine mark is found at Lys-494 and Lys-512.

The protein belongs to the AAA ATPase family. Can form homooligomers. Homodimer formation at the N-terminus may be regulated by ATP and is required for the interaction with the inner surface of the mitochondrial outer membrane and correct mitochondrial homeostasis. Interacts with components of the mitochondrial ribosome and with other proteins involved in mitochondrial RNA metabolism. May also interact with protein involved in lipid metabolism, including STARD9. May interact with FAM210A. Interacts with GADD45GIP1. Interacts with S100B in a Ca(+2)- and Zn(+2)-dependent manner; this interaction probably occurs in the cytosol prior to mitochondrial targeting. S100B could assist ATAD3A cytoplasmic processing, preventing aggregation and favoring mitochondrial localization. Interacts with HSP60/HSPD1. Interacts with CLPB. Interacts with EIF2AK3/PERK; ATAD3A and EIF2S1/eIF-2-alpha occupy a common binding site within the cytoplasmic loop of EIF2AK3/PERK, leading to prevent EIF2AK3/PERK association with its substrate EIF2S1/eIF-2-alpha.

It is found in the mitochondrion inner membrane. The protein localises to the mitochondrion matrix. Its subcellular location is the mitochondrion nucleoid. It carries out the reaction ATP + H2O = ADP + phosphate + H(+). Functionally, essential for mitochondrial network organization, mitochondrial metabolism and cell growth at organism and cellular level. May play an important role in mitochondrial protein synthesis. May also participate in mitochondrial DNA replication. May bind to mitochondrial DNA D-loops and contribute to nucleoid stability. Required for enhanced channeling of cholesterol for hormone-dependent steroidogenesis. Involved in mitochondrial-mediated antiviral innate immunity. Required to protect mitochondria from the PERK-mediated unfolded protein response: specifically inhibits the activity of EIF2AK3/PERK at mitochondria-endoplasmic reticulum contact sites, thereby providing a safe haven for mitochondrial protein translation during endoplasmic reticulum stress. Ability to inhibit EIF2AK3/PERK is independent of its ATPase activity. Also involved in the mitochondrial DNA damage response by promoting signaling between damaged genomes and the mitochondrial membrane, leading to activation of the integrated stress response (ISR). The protein is ATPase family AAA domain-containing protein 3A (Atad3a) of Rattus norvegicus (Rat).